Here is a 918-residue protein sequence, read N- to C-terminus: Probable UDP-N-acetylglucosamine--peptide N-acetylglucosaminyltransferase SPINDLY (918 aa).

11 TPR repeats span residues 34–66 (GKEA…SKNV), 67–99 (EAHI…DPHN), 101–132 (CALT…DPSY), 140–171 (ATVL…DPHY), 172–205 (APAC…SPTY), 207–238 (DAYC…NNMG), 239–271 (IALT…NWHY), 273–305 (DAMY…NPHC), 306–339 (AEAC…KPNF), 341–373 (QSLN…NPTY), and 374–407 (AEAY…DPDS). The interval 408 to 918 (RNAGQNRLLA…LNCGDQCFRV (511 aa)) is catalytic region. Over residues 843–853 (QLHQQPNTSPQ) the composition is skewed to polar residues. Positions 843-877 (QLHQQPNTSPQKLVKDEPADDASGPEHGPASKDNP) are disordered.

The protein belongs to the glycosyltransferase 41 family. O-GlcNAc transferase subfamily.

The protein localises to the nucleus. It carries out the reaction L-seryl-[protein] + UDP-N-acetyl-alpha-D-glucosamine = 3-O-(N-acetyl-beta-D-glucosaminyl)-L-seryl-[protein] + UDP + H(+). It catalyses the reaction L-threonyl-[protein] + UDP-N-acetyl-alpha-D-glucosamine = 3-O-(N-acetyl-beta-D-glucosaminyl)-L-threonyl-[protein] + UDP + H(+). The protein operates within protein modification; protein glycosylation. Functionally, probable O-linked N-acetylglucosamine transferase (OGT) involved in various processes such as gibberellin (GA) signaling pathway. OGTs catalyze the addition of nucleotide-activated sugars directly onto the polypeptide through O-glycosidic linkage with the hydroxyl of serine or threonine. Probably acts by adding O-linked sugars to yet unknown proteins. May function as a negative regulator of GA signal transduction during vernalization, inhibiting adventitious shoot elongation during vernalization. This Eustoma exaltatum subsp. russellianum (Bluebells) protein is Probable UDP-N-acetylglucosamine--peptide N-acetylglucosaminyltransferase SPINDLY (SPY).